The primary structure comprises 822 residues: uncharacterized protein (822 aa).

The interval 1 to 230 (MARGKRSTQR…NAAPLNKTDA (230 aa)) is disordered. A Phosphoserine modification is found at Ser27. Residues 34–44 (SKAKKNKKKLN) are compositionally biased toward basic residues. Phosphoserine is present on residues Ser47, Ser51, and Ser55. Tyr57 carries the post-translational modification Phosphotyrosine. A compositionally biased stretch (acidic residues) spans 61–70 (PEDDEVDEEV). Over residues 73–85 (VKKKPSKKSKKAK) the composition is skewed to basic residues. Residues 92–106 (FADEQSVEEEEEEDS) are compositionally biased toward acidic residues. Residue Ser97 is modified to Phosphoserine. Basic residues predominate over residues 111–121 (RKNKKSSKKAS). Composition is skewed to acidic residues over residues 129–144 (LADD…EESE) and 163–172 (SEALDDGDIE). Ser137 and Ser163 each carry phosphoserine. 2 consecutive ABC transporter domains span residues 276–519 (LQVE…VQLA) and 594–809 (IKFQ…AKER). Residues 308 to 315 (APNGSGKS) and 627 to 634 (GPNGAGKT) contribute to the ATP site.

The protein belongs to the ABC transporter superfamily.

The protein localises to the cytoplasm. This is an uncharacterized protein from Schizosaccharomyces pombe (strain 972 / ATCC 24843) (Fission yeast).